Here is a 544-residue protein sequence, read N- to C-terminus: Chaperonin GroEL 1 (544 aa).

ATP is bound by residues 29-32 (TLGP), 86-90 (DGTTT), G413, 479-481 (NAA), and D495. Residues 525–544 (PEPKDNAPAGAGAGGGDFDY) form a disordered region. The segment covering 535–544 (AGAGGGDFDY) has biased composition (gly residues).

It belongs to the chaperonin (HSP60) family. Forms a cylinder of 14 subunits composed of two heptameric rings stacked back-to-back. Interacts with the co-chaperonin GroES.

The protein resides in the cytoplasm. It carries out the reaction ATP + H2O + a folded polypeptide = ADP + phosphate + an unfolded polypeptide.. In terms of biological role, together with its co-chaperonin GroES, plays an essential role in assisting protein folding. The GroEL-GroES system forms a nano-cage that allows encapsulation of the non-native substrate proteins and provides a physical environment optimized to promote and accelerate protein folding. The protein is Chaperonin GroEL 1 of Nostoc sp. (strain PCC 7120 / SAG 25.82 / UTEX 2576).